The following is a 112-amino-acid chain: UPF0122 protein CPE1714 (112 aa).

It belongs to the UPF0122 family.

Functionally, might take part in the signal recognition particle (SRP) pathway. This is inferred from the conservation of its genetic proximity to ftsY/ffh. May be a regulatory protein. The polypeptide is UPF0122 protein CPE1714 (Clostridium perfringens (strain 13 / Type A)).